The sequence spans 313 residues: N-acetyl-gamma-glutamyl-phosphate reductase (313 aa).

Cys117 is a catalytic residue.

It belongs to the NAGSA dehydrogenase family. Type 2 subfamily.

It is found in the cytoplasm. It catalyses the reaction N-acetyl-L-glutamate 5-semialdehyde + phosphate + NADP(+) = N-acetyl-L-glutamyl 5-phosphate + NADPH + H(+). Its pathway is amino-acid biosynthesis; L-arginine biosynthesis; N(2)-acetyl-L-ornithine from L-glutamate: step 3/4. Its function is as follows. Catalyzes the NADPH-dependent reduction of N-acetyl-5-glutamyl phosphate to yield N-acetyl-L-glutamate 5-semialdehyde. This chain is N-acetyl-gamma-glutamyl-phosphate reductase, found in Burkholderia cenocepacia (strain HI2424).